The primary structure comprises 452 residues: MGKYFGTDGVRGEANVELTPEMAFKLGRFGGYVLSQHELETPKVYVGRDTRISGQMLASSLISGLLSVGIEVYDLGVIATPGVAYLVKKDGASAGVMISASHNPALDNGIKFFGGDGYKLEDEKELEIEALIDAKEDTLPRPSAQGLGMLHDYIEGVRKYQAFLKTTAEGDFEGYNVVLDTANGASYTSARAVFADLKANLTVIGENPDGLNINVKVGSTHPEAMAKKVVETGSDLGLAFDGDADRLIAVDENGEIVDGDKIMFIVGKYLLEQGKLAQDTLVTTVMSNLGFHLALEEAGINSVITAVGDRYVVEEMKKNNYNFGGEQSGHMIFLDYNTTGDGQLSAIQLLKVMRETGKTLSELASEVTIYPQKLVNVRVKDNAAKKSAMDVPAIQKVISEMETSMNGKGRILVRPSGTEPLLRVMAEAPTHEQVDHVVDTIVEVVEEEIGVK.

S101 (phosphoserine intermediate) is an active-site residue. Residues S101, D241, D243, and D245 each contribute to the Mg(2+) site. Position 101 is a phosphoserine (S101).

This sequence belongs to the phosphohexose mutase family. The cofactor is Mg(2+). Activated by phosphorylation.

The enzyme catalyses alpha-D-glucosamine 1-phosphate = D-glucosamine 6-phosphate. Catalyzes the conversion of glucosamine-6-phosphate to glucosamine-1-phosphate. This is Phosphoglucosamine mutase from Lactococcus lactis subsp. cremoris (strain MG1363).